The following is a 144-amino-acid chain: Large ribosomal subunit protein uL15 (144 aa).

The tract at residues 1-49 (MRLNTLSPAAGAKSAAKRVGRGIGSGLGKTAGRGHKGQKSRSGGGVRVG) is disordered. The span at 21–31 (RGIGSGLGKTA) shows a compositional bias: gly residues.

The protein belongs to the universal ribosomal protein uL15 family. Part of the 50S ribosomal subunit.

Functionally, binds to the 23S rRNA. This is Large ribosomal subunit protein uL15 from Shewanella piezotolerans (strain WP3 / JCM 13877).